We begin with the raw amino-acid sequence, 67 residues long: DNA-directed RNA polymerases I, II, and III subunit RPABC5 (67 aa).

Residues Cys-7, Cys-10, Cys-44, and Cys-45 each contribute to the Zn(2+) site.

This sequence belongs to the archaeal Rpo10/eukaryotic RPB10 RNA polymerase subunit family. Component of the RNA polymerase I (Pol I), RNA polymerase II (Pol II) and RNA polymerase III (Pol III) complexes consisting of at least 13, 12 and 17 subunits, respectively. Pol I complex consists of a ten-subunit catalytic core composed of POLR1A/RPA1, POLR1B/RPA2, POLR1C/RPAC1, POLR1D/RPAC2, POLR1H/RPA12, POLR2E/RPABC1, POLR2F/RPABC2, POLR2H/RPABC3, POLR2K/RPABC4 and POLR2L/RPABC5; a mobile stalk subunit POLR1F/RPA43 protruding from the core and additional subunits homologous to general transcription factors POLR1E/RPA49 and POLR1G/RPA34. Part of Pol I pre-initiation complex (PIC), in which Pol I core assembles with RRN3 and promoter-bound UTBF and SL1/TIF-IB complex. Pol II complex contains a ten-subunit catalytic core composed of POLR2A/RPB1, POLR2B/RPB2, POLR2C/RPB3, POLR2I/RPB9, POLR2J/RPB11, POLR2E/RPABC1, POLR2F/RPABC2, POLR2H/RPABC3, POLR2K/RPABC4 and POLR2L/RPABC5 and a mobile stalk composed of two subunits POLR2D/RPB4 and POLR2G/RPB7. Part of Pol II(G) complex, in which Pol II core associates with an additional subunit POLR2M; unlike conventional Pol II, Pol II(G) functions as a transcriptional repressor. Part of TBP-based Pol II pre-initiation complex (PIC), in which Pol II core assembles with general transcription factors and other specific initiation factors including GTF2E1, GTF2E2, GTF2F1, GTF2F2, TCEA1, ERCC2, ERCC3, GTF2H2, GTF2H3, GTF2H4, GTF2H5, GTF2A1, GTF2A2, GTF2B and TBP; this large multi-subunit PIC complex mediates DNA unwinding and targets Pol II core to the transcription start site where the first phosphodiester bond forms. Pol III complex consists of a ten-subunit catalytic core composed of POLR3A/RPC1, POLR3B/RPC2, POLR1C/RPAC1, POLR1D/RPAC2, POLR3K/RPC10, POLR2E/RPABC1, POLR2F/RPABC2, POLR2H/RPABC3, POLR2K/RPABC4 and POLR2L/RPABC5; a mobile stalk composed of two subunits POLR3H/RPC8 and CRCP/RPC9, protruding from the core and functioning primarily in transcription initiation; and additional subunits homologous to general transcription factors of the RNA polymerase II machinery, POLR3C/RPC3-POLR3F/RPC6-POLR3G/RPC7 heterotrimer required for transcription initiation and POLR3D/RPC4-POLR3E/RPC5 heterodimer involved in both transcription initiation and termination.

The protein localises to the nucleus. It is found in the nucleolus. In terms of biological role, DNA-dependent RNA polymerase catalyzes the transcription of DNA into RNA using the four ribonucleoside triphosphates as substrates. Common component of RNA polymerases I, II and III which synthesize ribosomal RNA precursors, mRNA precursors and many functional non-coding RNAs, and a small RNAs, such as 5S rRNA and tRNAs, respectively. This is DNA-directed RNA polymerases I, II, and III subunit RPABC5 (POLR2L) from Bos taurus (Bovine).